The primary structure comprises 438 residues: Xylose isomerase (438 aa).

Residues H103 and D106 contribute to the active site. Mg(2+) contacts are provided by E234, E270, H273, D298, D309, D311, and D341.

Belongs to the xylose isomerase family. In terms of assembly, homotetramer. Requires Mg(2+) as cofactor.

The protein localises to the cytoplasm. The catalysed reaction is alpha-D-xylose = alpha-D-xylulofuranose. The polypeptide is Xylose isomerase (Phocaeicola vulgatus (strain ATCC 8482 / DSM 1447 / JCM 5826 / CCUG 4940 / NBRC 14291 / NCTC 11154) (Bacteroides vulgatus)).